A 672-amino-acid chain; its full sequence is APC membrane recruitment protein 2 (672 aa).

Positions 1–21 are enriched in gly residues; that stretch reads METGRSRGGGAAVSERGGGAR. Disordered regions lie at residues 1 to 23, 74 to 360, and 443 to 560; these read METGRSRGGGAAVSERGGGARAG, TMPS…DPSA, and MLSQ…DALC. Low complexity predominate over residues 142 to 158; that stretch reads GSLASSSVAKSHSFFSL. A Phosphoserine modification is found at Ser154. Basic and acidic residues-rich tracts occupy residues 163 to 175 and 201 to 210; these read GRSETGKGDHAEA and RGKEEEEKAV. Residues Ser223, Ser227, and Ser244 each carry the phosphoserine modification. The segment covering 230-254 has biased composition (basic and acidic residues); the sequence is CVKEEPPRAARRPDSPGQDASRHAA. Residues 255 to 269 are compositionally biased toward low complexity; that stretch reads GEPAGGEQAPASAES. At Ser284 the chain carries Phosphoserine. A compositionally biased stretch (basic and acidic residues) spans 289–303; sequence SRGEDAEGHRREEKP. Residues 343–354 are compositionally biased toward low complexity; it reads ASAVPDPSSVDP. A phosphoserine mark is found at Ser356 and Ser359. The span at 446 to 457 shows a compositional bias: low complexity; sequence QTEDQGQGTQEG. 2 stretches are compositionally biased toward basic and acidic residues: residues 478–488 and 502–516; these read RCGEAAKDMSS and QQKEEPKHPEKEHQE.

The protein belongs to the Amer family. As to quaternary structure, interacts with APC.

It is found in the cell membrane. Its function is as follows. Negative regulator of the canonical Wnt signaling pathway involved in neuroectodermal patterning. Acts by specifically binding phosphatidylinositol 4,5-bisphosphate (PtdIns(4,5)P2), translocating to the cell membrane and interacting with key regulators of the canonical Wnt signaling pathway, such as components of the beta-catenin destruction complex. The chain is APC membrane recruitment protein 2 (Amer2) from Mus musculus (Mouse).